The chain runs to 471 residues: Anthocyanidin 3-O-glucosyltransferase (471 aa).

Histidine 24 (proton acceptor) is an active-site residue. Histidine 24 contacts an anthocyanidin. Aspartate 130 functions as the Charge relay in the catalytic mechanism. Residue threonine 152 participates in UDP-alpha-D-glucose binding. Histidine 161 serves as a coordination point for an anthocyanidin. Alanine 352, glutamine 354, histidine 369, tryptophan 372, serine 374, and glutamate 377 together coordinate UDP-alpha-D-glucose. Residue glycine 392 participates in an anthocyanidin binding. Residues aspartate 393 and glutamine 394 each contribute to the UDP-alpha-D-glucose site.

The protein belongs to the UDP-glycosyltransferase family.

The catalysed reaction is an anthocyanidin + UDP-alpha-D-glucose + H(+) = an anthocyanidin 3-O-beta-D-glucoside + UDP. It functions in the pathway pigment biosynthesis; anthocyanin biosynthesis. In the presence of other necessary color factors, this glycosylation reaction allows the accumulation of anthocyanin pigments. The polypeptide is Anthocyanidin 3-O-glucosyltransferase (BZ1) (Zea mays (Maize)).